A 313-amino-acid polypeptide reads, in one-letter code: Ribosomal RNA small subunit methyltransferase H (313 aa).

Residues 35–37 (GGH), D55, F79, D100, and Q107 each bind S-adenosyl-L-methionine.

It belongs to the methyltransferase superfamily. RsmH family.

It is found in the cytoplasm. It carries out the reaction cytidine(1402) in 16S rRNA + S-adenosyl-L-methionine = N(4)-methylcytidine(1402) in 16S rRNA + S-adenosyl-L-homocysteine + H(+). Functionally, specifically methylates the N4 position of cytidine in position 1402 (C1402) of 16S rRNA. This Burkholderia vietnamiensis (strain G4 / LMG 22486) (Burkholderia cepacia (strain R1808)) protein is Ribosomal RNA small subunit methyltransferase H.